Here is a 204-residue protein sequence, read N- to C-terminus: Dephospho-CoA kinase (204 aa).

Positions 4–201 (VIGLTGGIAS…EKYLAMCKKN (198 aa)) constitute a DPCK domain. 12-17 (ASGKTT) serves as a coordination point for ATP.

The protein belongs to the CoaE family.

It localises to the cytoplasm. It carries out the reaction 3'-dephospho-CoA + ATP = ADP + CoA + H(+). Its pathway is cofactor biosynthesis; coenzyme A biosynthesis; CoA from (R)-pantothenate: step 5/5. Its function is as follows. Catalyzes the phosphorylation of the 3'-hydroxyl group of dephosphocoenzyme A to form coenzyme A. The sequence is that of Dephospho-CoA kinase from Vibrio parahaemolyticus serotype O3:K6 (strain RIMD 2210633).